An 85-amino-acid chain; its full sequence is Toxin Cll7 (85 aa).

A signal peptide spans M1–A19. One can recognise an LCN-type CS-alpha/beta domain in the interval K20 to G83. 4 cysteine pairs are disulfide-bonded: C31–C82, C35–C58, C44–C63, and C48–C65.

Belongs to the long (4 C-C) scorpion toxin superfamily. Sodium channel inhibitor family. Beta subfamily. In terms of tissue distribution, expressed by the venom gland.

It is found in the secreted. Its function is as follows. Beta toxins bind voltage-independently at site-4 of sodium channels (Nav) and shift the voltage of activation toward more negative potentials thereby affecting sodium channel activation and promoting spontaneous and repetitive firing. The protein is Toxin Cll7 of Centruroides limpidus (Mexican scorpion).